The chain runs to 398 residues: Acetate kinase (398 aa).

Residue Asn8 participates in Mg(2+) binding. Position 15 (Lys15) interacts with ATP. A substrate-binding site is contributed by Arg89. The active-site Proton donor/acceptor is the Asp146. ATP-binding positions include 206 to 210, 281 to 283, and 329 to 333; these read HIGNG, DLR, and GVGEN. Mg(2+) is bound at residue Glu383.

Belongs to the acetokinase family. As to quaternary structure, homodimer. Requires Mg(2+) as cofactor. The cofactor is Mn(2+).

Its subcellular location is the cytoplasm. It catalyses the reaction acetate + ATP = acetyl phosphate + ADP. Its pathway is metabolic intermediate biosynthesis; acetyl-CoA biosynthesis; acetyl-CoA from acetate: step 1/2. Functionally, catalyzes the formation of acetyl phosphate from acetate and ATP. Can also catalyze the reverse reaction. The polypeptide is Acetate kinase (Macrococcus caseolyticus (strain JCSC5402) (Macrococcoides caseolyticum)).